The primary structure comprises 358 residues: MAERRIIHIDMDYFFAQVEMRDNPTLKGKPVIVGGKASTRGVVSTASYEARKYGVHSAMPMSQAHKLCPNGYYVRARFDAYREASAVIMSIFKSYTDIVEPMSLDEAYLDITHLVRPDLSASKIATFIRRDIFEQTGLTSSAGVSYNKFLAKLASGMNKPNGMKVIDYNNVNDILMNLDIGDFPGVGKASKKVMHNHDIYTGKDLYDKTEFELIRWFGKRGRGLYLKARGIDHSEVKATRVRKSVGTERTFSTDVNDDEEILQKIWELSGKTAERLSKLQKSGSTVTVKLKTYQYETFSKQRSLREAVSRDIDIYNVAYDLYNDLKDPDVPIRLIGVTVGNLEQSRYENMTIYDFIER.

The region spanning 6–187 (IIHIDMDYFF…LDIGDFPGVG (182 aa)) is the UmuC domain. Residues D10 and D105 each contribute to the Mg(2+) site. The active site involves E106.

The protein belongs to the DNA polymerase type-Y family. Monomer. The cofactor is Mg(2+).

It localises to the cytoplasm. It catalyses the reaction DNA(n) + a 2'-deoxyribonucleoside 5'-triphosphate = DNA(n+1) + diphosphate. Poorly processive, error-prone DNA polymerase involved in untargeted mutagenesis. Copies undamaged DNA at stalled replication forks, which arise in vivo from mismatched or misaligned primer ends. These misaligned primers can be extended by PolIV. Exhibits no 3'-5' exonuclease (proofreading) activity. May be involved in translesional synthesis, in conjunction with the beta clamp from PolIII. This chain is DNA polymerase IV, found in Staphylococcus haemolyticus (strain JCSC1435).